The sequence spans 663 residues: Alcohol oxidase 2 (663 aa).

8–38 lines the FAD pocket; the sequence is DILVLGGGSSGSCIAGRLANLDHSLKVGLIE. Histidine 567 serves as the catalytic Proton acceptor. The Microbody targeting signal signature appears at 661–663; the sequence is ARF.

Belongs to the GMC oxidoreductase family. Homooctamer. Requires FAD as cofactor.

It localises to the peroxisome matrix. The catalysed reaction is a primary alcohol + O2 = an aldehyde + H2O2. The protein operates within energy metabolism; methane degradation. Minor isoform of alcohol oxidase, which catalyzes the oxidation of methanol to formaldehyde and hydrogen peroxide, the first step in the methanol utilization pathway of methylotrophic yeasts. The chain is Alcohol oxidase 2 (AOX2) from Komagataella phaffii (strain ATCC 76273 / CBS 7435 / CECT 11047 / NRRL Y-11430 / Wegner 21-1) (Yeast).